The following is a 947-amino-acid chain: Protein NETWORKED 2A (947 aa).

An NAB domain is found at 10–90; sequence YSWWWASHIR…ERYDHLSREL (81 aa). The interval 105 to 131 is disordered; the sequence is VQFPLEDDSDENEDYDGRPRKPPKHLH. Residues 109–118 are compositionally biased toward acidic residues; it reads LEDDSDENED. Coiled-coil stretches lie at residues 348–454 and 568–619; these read KLAE…IQDV and VLRD…QKLD. 2 stretches are compositionally biased toward basic and acidic residues: residues 618 to 627 and 635 to 644; these read LDTTGKDSPH and LEHEQGHHET. Disordered regions lie at residues 618-675, 743-763, and 911-947; these read LDTT…RTKS, RIESKQQQESPRSSSNTAVAS, and KNRQQKQSASSLFSCVSPSPGLHKQSSYSRPPGKLPE. Polar residues predominate over residues 645-660; sequence VSISPTSNFSVATTPH. Residues 662–675 are compositionally biased toward basic and acidic residues; it reads QVGDVKRTPGRTKS. Residues 722-809 adopt a coiled-coil conformation; the sequence is VHQIQKYQTT…LANIQEEIAR (88 aa). 2 stretches are compositionally biased toward polar residues: residues 749 to 761 and 915 to 927; these read QQESPRSSSNTAV and QKQSASSLFSCVS.

It belongs to the NET family. In terms of tissue distribution, expressed specifically in pollen.

It is found in the cell membrane. Its function is as follows. Plant-specific actin binding protein. Associates with F-actin at the plasma membrane in growing pollen tubes. May be part of a membrane-cytoskeletal adapter complex. This chain is Protein NETWORKED 2A, found in Arabidopsis thaliana (Mouse-ear cress).